Reading from the N-terminus, the 149-residue chain is Urease accessory protein UreE (149 aa).

It belongs to the UreE family.

It localises to the cytoplasm. In terms of biological role, involved in urease metallocenter assembly. Binds nickel. Probably functions as a nickel donor during metallocenter assembly. This Prochlorococcus marinus (strain MIT 9312) protein is Urease accessory protein UreE.